The sequence spans 359 residues: Pyruvate dehydrogenase E1 component subunit beta, mitochondrial (359 aa).

The transit peptide at 1–30 (MAAVAGLVRGPLRQASGLLKRRFHRSAPAA) directs the protein to the mitochondrion. The residue at position 67 (Tyr-67) is a Phosphotyrosine. Thiamine diphosphate is bound at residue Glu-89. K(+)-binding residues include Ile-142, Ala-190, Ile-191, Asp-193, and Asn-195. Lys-354 is modified (N6-acetyllysine).

As to quaternary structure, heterotetramer of two PDHA1 and two PDHB subunits. The heterotetramer interacts with DLAT, and is part of the multimeric pyruvate dehydrogenase complex that contains multiple copies of pyruvate dehydrogenase (E1), dihydrolipoamide acetyltransferase (DLAT, E2) and lipoamide dehydrogenase (DLD, E3). These subunits are bound to an inner core composed of about 48 DLAT and 12 PDHX molecules. Interacts with DLAT. Requires thiamine diphosphate as cofactor.

The protein localises to the mitochondrion matrix. It carries out the reaction N(6)-[(R)-lipoyl]-L-lysyl-[protein] + pyruvate + H(+) = N(6)-[(R)-S(8)-acetyldihydrolipoyl]-L-lysyl-[protein] + CO2. In terms of biological role, the pyruvate dehydrogenase complex catalyzes the overall conversion of pyruvate to acetyl-CoA and CO(2), and thereby links the glycolytic pathway to the tricarboxylic cycle. In Rattus norvegicus (Rat), this protein is Pyruvate dehydrogenase E1 component subunit beta, mitochondrial (Pdhb).